The sequence spans 582 residues: ATP-dependent lipid A-core flippase (582 aa).

A run of 5 helical transmembrane segments spans residues 25–45 (AGLIVAAIALILNAASDTFML), 69–89 (LAVIGLMVVRGVTGFVSSYCI), 137–159 (ASSSSALVTVVREGASIIGLFIM), 253–273 (PIIQLIASFALALVLYAASFP), and 275–295 (VMETLTAGTITVVFSAMIALM). The ABC transmembrane type-1 domain occupies 28-310 (IVAAIALILN…LTNVNTQFQR (283 aa)). An ABC transporter domain is found at 342–578 (IEFRHVTFYY…QGVYAQLNRM (237 aa)). 376 to 383 (GRSGSGKS) is a binding site for ATP.

It belongs to the ABC transporter superfamily. Lipid exporter (TC 3.A.1.106) family. Homodimer.

It is found in the cell inner membrane. The catalysed reaction is ATP + H2O + lipid A-core oligosaccharideSide 1 = ADP + phosphate + lipid A-core oligosaccharideSide 2.. Involved in lipopolysaccharide (LPS) biosynthesis. Translocates lipid A-core from the inner to the outer leaflet of the inner membrane. Transmembrane domains (TMD) form a pore in the inner membrane and the ATP-binding domain (NBD) is responsible for energy generation. The chain is ATP-dependent lipid A-core flippase from Yersinia pestis bv. Antiqua (strain Antiqua).